The primary structure comprises 570 residues: Dual specificity testis-specific protein kinase 2 (570 aa).

Residues 58 to 313 (DFTREKIGSG…EIGKTLEEIM (256 aa)) enclose the Protein kinase domain. ATP is bound by residues 64-72 (IGSGFFSEV) and lysine 87. The active-site Proton acceptor is aspartate 176. Serine 219 carries the post-translational modification Phosphoserine; by autocatalysis. 3 positions are modified to phosphoserine: serine 369, serine 456, and serine 460. The disordered stretch occupies residues 513–570 (DCSNPQEENGFVPRPKGTSPCSGAASEEMEVEEERPRRAPVHFSISGISLQTQGEQDG). Over residues 558–570 (SGISLQTQGEQDG) the composition is skewed to polar residues.

Belongs to the protein kinase superfamily. TKL Ser/Thr protein kinase family. Requires Mg(2+) as cofactor. The cofactor is Mn(2+). As to expression, predominantly expressed in testis and prostate. Found predominantly in non-germinal Sertoli cells.

The protein localises to the nucleus. The enzyme catalyses L-seryl-[protein] + ATP = O-phospho-L-seryl-[protein] + ADP + H(+). It catalyses the reaction L-threonyl-[protein] + ATP = O-phospho-L-threonyl-[protein] + ADP + H(+). It carries out the reaction L-tyrosyl-[protein] + ATP = O-phospho-L-tyrosyl-[protein] + ADP + H(+). Activated by autophosphorylation on Ser-219. Dual specificity protein kinase activity catalyzing autophosphorylation and phosphorylation of exogenous substrates on both serine/threonine and tyrosine residues. Phosphorylates cofilin at 'Ser-3'. May play an important role in spermatogenesis. The chain is Dual specificity testis-specific protein kinase 2 (Tesk2) from Rattus norvegicus (Rat).